The primary structure comprises 358 residues: DNA polymerase IV (358 aa).

Residues 4–185 (IIHIDMDCYF…LSLRKIPGVG (182 aa)) form the UmuC domain. Mg(2+)-binding residues include Asp-8 and Asp-103. The active site involves Glu-104.

The protein belongs to the DNA polymerase type-Y family. In terms of assembly, monomer. Mg(2+) is required as a cofactor.

It localises to the cytoplasm. It catalyses the reaction DNA(n) + a 2'-deoxyribonucleoside 5'-triphosphate = DNA(n+1) + diphosphate. Its function is as follows. Poorly processive, error-prone DNA polymerase involved in untargeted mutagenesis. Copies undamaged DNA at stalled replication forks, which arise in vivo from mismatched or misaligned primer ends. These misaligned primers can be extended by PolIV. Exhibits no 3'-5' exonuclease (proofreading) activity. May be involved in translesional synthesis, in conjunction with the beta clamp from PolIII. The protein is DNA polymerase IV of Shewanella baltica (strain OS155 / ATCC BAA-1091).